The following is a 260-amino-acid chain: Phosphatidylglycerol--prolipoprotein diacylglyceryl transferase (260 aa).

Helical transmembrane passes span 17 to 37 (VVKWYGIMMALGVVALVSWIF), 52 to 72 (LTAAIIAIPSGIVFAKLLHVI), 85 to 105 (IFSGEGLTIFGAIIGATIGLW), and 113 to 133 (FNLGYLLDVAVPGILLGQAIG). Arg134 contacts a 1,2-diacyl-sn-glycero-3-phospho-(1'-sn-glycerol). Helical transmembrane passes span 170–190 (APTQAYEIIFLLCLLTFSLFI), 198–218 (GQLFLLYISLYAAWRVAIGFV), and 227–247 (GLEQAQVVGLILMAVAVPLFI).

It belongs to the Lgt family.

It localises to the cell membrane. The catalysed reaction is L-cysteinyl-[prolipoprotein] + a 1,2-diacyl-sn-glycero-3-phospho-(1'-sn-glycerol) = an S-1,2-diacyl-sn-glyceryl-L-cysteinyl-[prolipoprotein] + sn-glycerol 1-phosphate + H(+). The protein operates within protein modification; lipoprotein biosynthesis (diacylglyceryl transfer). In terms of biological role, catalyzes the transfer of the diacylglyceryl group from phosphatidylglycerol to the sulfhydryl group of the N-terminal cysteine of a prolipoprotein, the first step in the formation of mature lipoproteins. This chain is Phosphatidylglycerol--prolipoprotein diacylglyceryl transferase, found in Dehalococcoides mccartyi (strain ATCC BAA-2100 / JCM 16839 / KCTC 5957 / BAV1).